Consider the following 1370-residue polypeptide: MDPSDFPSPFDPLTLPEKPLAGDLPVDMEFGEDLLESQTAPSRGWAPPGPSPSSGALDLLDTPSGLEKDPGGVLDGATELLGLGGLLYKAPSPPEVDHGPEGTLAWDSGEQTLEPGPGCQTPEVMPPDPGAGASPPSPEGLLEPLAPDSPIILESPHIEEEIPPLATRRRGSPGQEEEHTQGQPQSPNAPPSPSVGETLGDGINSSQSKPGVCTPTAHPSLPGDGLTGKEIEKPPERVQKRSERVRRAEPPKPEVVDSTESIPVSDEDSDAMVDDPNDEDFVPFRPRRSPRMSLRSSMAQRAGRSSMGTKMSCAHCRTPLQKGQTAYQRKGLPQLFCSSSCLTTYSKKPLGRKTCTFCKKEIWNTKDSVVVQTGPGGSFHEFCTSVCLSLYEAQQQRPIPQSGDPADATRCSICQKTGEVLHEVSNGSVVHRLCSDSCFSKFRANKGLKTNCCDQCGAYIYARPGGLGPELLFHDGQQKRFCNTTCLGAYKKKNTRVYPCVWCKTLCKNFEMLSHVDRNGKTSLFCSLCCTTSYKVKQAGLTGPPRPCSFCRRSLSDPCYYNKVDRTVYQFCSPSCWTKFQHTSPEGGIHLSCHYCHSLFSGKPEVLEWQDQVFQFCCRDCCEDFKRLRGVVSQCEHCRQEKLLHEKLRFSGVEKSFCSEGCVLLYKQDFTKKLGLCCITCTYCSQTCQRGVTEQLDGSTWDFCSEDCKTKYLLWYCKAARCHACKRQGKLLETIHWRGQIRHFCNQQCLLRFYSQQNQPNLDTQSGPESLLNSQSSESKPQTPSQTKVENNHTVRTPDENGNLGKTPVKRATPSVPTPPPPPPPATPRKNKAAMCKPLMQNRGVSCKAEMKSKGSQTEEWKPQVIVLPIPVPIFVPVPMHLYCQKVPVPFSMPIPVPVPMFLPTTLESTEKIVETIEELKVKIPSNPLEADILAMAEMIAEAEELDKASSDLCDLVSNQSAEGLLEDCDLFGTARDDVLAMAVKMANVLDEPGQDLEADFPKNPLDINPSVDFLFDCGLVGPEDVSTEQDLPRAMRKGQKRLMLSESCSRDSLSSQPSCTGLNYSYGVNAWKCWVQSKYANGETSKGDELRFGPKPMRIKEDILACSAAELNYGLAQFVREITRPNGERYEPDSIYYLCLGIQQYLLENNRMVNIFTDLYYLTFVQELNKSLSTWQPTLLPNNTVFSRVEEEHLWECKQLGVYSPFVLLNTLMFFNTKFFGLQTAEEHMQLSFTNVVRQSRKCTTPRGTTKVVSIRYYAPVRQRKGRDTGPGKRKREDETILEQRENRMNPLRCPVKFYEFYLSKCPESLRTRNDVFYLQPERSCIAESPLWYSVIPMDRSMLESMLNRILAVREIYEELGRPGEEDLD.

Composition is skewed to low complexity over residues 1 to 12, 40 to 56, and 130 to 146; these read MDPSDFPSPFDP, APSR…SSGA, and GAGA…EPLA. Disordered regions lie at residues 1–73 and 85–310; these read MDPS…PGGV and GLLY…MGTK. Residues 227–255 show a composition bias toward basic and acidic residues; the sequence is TGKEIEKPPERVQKRSERVRRAEPPKPEV. A phosphoserine mark is found at S265 and S269. Residues 265–281 show a composition bias toward acidic residues; sequence SDEDSDAMVDDPNDEDF. Glycyl lysine isopeptide (Lys-Gly) (interchain with G-Cter in SUMO2) cross-links involve residues K310, K322, and K330. MYM-type zinc fingers lie at residues 334–368, 380–424, 431–466, 479–513, 523–561, 569–606, 614–648, 655–694, and 701–735; these read QLFC…TKDS, HEFC…LHEV, HRLC…RPGG, KRFC…FEML, SLFC…PCYY, YQFC…KPEV, FQFC…HEKL, KSFC…GVTE, and WDFC…LETI. A compositionally biased stretch (polar residues) spans 761–789; that stretch reads NLDTQSGPESLLNSQSSESKPQTPSQTKV. The interval 761-831 is disordered; sequence NLDTQSGPES…PPPPATPRKN (71 aa). Glycyl lysine isopeptide (Lys-Gly) (interchain with G-Cter in SUMO2) cross-links involve residues K780 and K788. Basic and acidic residues predominate over residues 790–799; that stretch reads ENNHTVRTPD. T797 carries the post-translational modification Phosphothreonine. Residue K806 forms a Glycyl lysine isopeptide (Lys-Gly) (interchain with G-Cter in SUMO2) linkage. Over residues 816-827 the composition is skewed to pro residues; sequence VPTPPPPPPPAT. Residues T818 and T827 each carry the phosphothreonine modification. Residues K848, K862, K921, and K1276 each participate in a glycyl lysine isopeptide (Lys-Gly) (interchain with G-Cter in SUMO2) cross-link.

As to quaternary structure, may be a component of a BHC histone deacetylase complex that contains HDAC1, HDAC2, HMG20B/BRAF35, KDM1A, RCOR1/CoREST, PHF21A/BHC80, ZMYM2, ZNF217, ZMYM3, GSE1 and GTF2I. In terms of tissue distribution, ubiquitously expressed in all embryonic stages and adult tissues.

It localises to the nucleus. Functionally, plays a role in the regulation of cell morphology and cytoskeletal organization. The chain is Zinc finger MYM-type protein 3 (Zmym3) from Mus musculus (Mouse).